A 181-amino-acid polypeptide reads, in one-letter code: Large ribosomal subunit protein uL6 (181 aa).

This sequence belongs to the universal ribosomal protein uL6 family. As to quaternary structure, part of the 50S ribosomal subunit.

Functionally, this protein binds to the 23S rRNA, and is important in its secondary structure. It is located near the subunit interface in the base of the L7/L12 stalk, and near the tRNA binding site of the peptidyltransferase center. This chain is Large ribosomal subunit protein uL6, found in Vesicomyosocius okutanii subsp. Calyptogena okutanii (strain HA).